A 711-amino-acid polypeptide reads, in one-letter code: F-box only protein 34 (711 aa).

4 disordered regions span residues 1–36, 249–271, 337–372, and 494–529; these read MHLK…VNDE, SESY…EVGE, DTQV…ASQD, and YSQL…GSAE. Over residues 10-23 the composition is skewed to basic and acidic residues; that stretch reads QKKEHPPEVSRETQ. Over residues 354–364 the composition is skewed to basic and acidic residues; that stretch reads RADRCSPKEDQ. The F-box domain maps to 572-624; the sequence is QQYMAFLPHHIMVKIFRLLPTKSLVALKCTCCYFKFIIEYYNIRPADSRWVRD.

As to quaternary structure, directly interacts with SKP1 and CUL1.

Functionally, substrate-recognition component of the SCF (SKP1-CUL1-F-box protein)-type E3 ubiquitin ligase complex. In Homo sapiens (Human), this protein is F-box only protein 34 (FBXO34).